We begin with the raw amino-acid sequence, 200 residues long: Holliday junction resolvase RecU (200 aa).

The interval 1–25 is disordered; it reads MTIRYPNGKRYNQASQPQKTPIKTH. Over residues 10–25 the composition is skewed to polar residues; it reads RYNQASQPQKTPIKTH. Residues threonine 85, aspartate 87, glutamate 100, and glutamine 119 each contribute to the Mg(2+) site.

This sequence belongs to the RecU family. Mg(2+) is required as a cofactor.

The protein resides in the cytoplasm. The catalysed reaction is Endonucleolytic cleavage at a junction such as a reciprocal single-stranded crossover between two homologous DNA duplexes (Holliday junction).. Functionally, endonuclease that resolves Holliday junction intermediates in genetic recombination. Cleaves mobile four-strand junctions by introducing symmetrical nicks in paired strands. Promotes annealing of linear ssDNA with homologous dsDNA. Required for DNA repair, homologous recombination and chromosome segregation. This is Holliday junction resolvase RecU from Bacillus cereus (strain B4264).